The chain runs to 427 residues: Fc receptor-like B (427 aa).

A signal peptide spans 1–17; the sequence is MWMLAALLLLVPRSGKA. 2 consecutive Ig-like C2-type domains span residues 23-101 and 103-189; these read PVLT…LSVS and DWLI…VAVT. Cystine bridges form between C44–C85 and C124–C168. N152 carries an N-linked (GlcNAc...) asparagine glycan. The span at 401 to 418 shows a compositional bias: polar residues; the sequence is TPETPNSHVTVNPATPET. Residues 401–427 are disordered; it reads TPETPNSHVTVNPATPETTVMEGRVDS.

As to expression, expressed at low levels. Expressed in B-lymphocytes. Detected in spleen, lymph node, kidney, lung and brain.

The protein localises to the cytoplasm. Its subcellular location is the endoplasmic reticulum. This Mus musculus (Mouse) protein is Fc receptor-like B (Fcrlb).